Reading from the N-terminus, the 175-residue chain is NADH dehydrogenase [ubiquinone] 1 alpha subcomplex assembly factor 4 (175 aa).

Gly2 is lipidated: N-myristoyl glycine. Ser35 carries the post-translational modification Phosphoserine.

Belongs to the NDUFAF4 family. Binds calmodulin. Interacts with NDUFAF3. As to quaternary structure, (Microbial infection) Interacts with the vesicular stomatitis virus matrix protein/M; the interaction inhibits viral propagation. Post-translationally, phosphorylated on serine. Prolactin stimulate serine phosphorylation.

Its subcellular location is the mitochondrion. It localises to the membrane. Functionally, involved in the assembly of mitochondrial NADH:ubiquinone oxidoreductase complex (complex I). May be involved in cell proliferation and survival of hormone-dependent tumor cells. May be a regulator of breast tumor cell invasion. In Homo sapiens (Human), this protein is NADH dehydrogenase [ubiquinone] 1 alpha subcomplex assembly factor 4.